The chain runs to 1014 residues: Isoleucine--tRNA ligase (1014 aa).

The short motif at 48–58 is the 'HIGH' region element; sequence PTANGRPGIHH. Positions 628-632 match the 'KMSKS' region motif; it reads KMSKS. Residue K631 coordinates ATP.

This sequence belongs to the class-I aminoacyl-tRNA synthetase family. IleS type 2 subfamily. In terms of assembly, monomer. Requires Zn(2+) as cofactor.

The protein localises to the cytoplasm. The enzyme catalyses tRNA(Ile) + L-isoleucine + ATP = L-isoleucyl-tRNA(Ile) + AMP + diphosphate. In terms of biological role, catalyzes the attachment of isoleucine to tRNA(Ile). As IleRS can inadvertently accommodate and process structurally similar amino acids such as valine, to avoid such errors it has two additional distinct tRNA(Ile)-dependent editing activities. One activity is designated as 'pretransfer' editing and involves the hydrolysis of activated Val-AMP. The other activity is designated 'posttransfer' editing and involves deacylation of mischarged Val-tRNA(Ile). The polypeptide is Isoleucine--tRNA ligase (Dehalococcoides mccartyi (strain CBDB1)).